The sequence spans 540 residues: Membrane protein insertase YidC (540 aa).

Helical transmembrane passes span 1 to 21, 351 to 371, 418 to 438, 464 to 484, and 497 to 517; these read MVVQ…MMLD, NWGI…FPLT, LGGC…YYML, ILPI…PSSI, and PLIF…YYII.

Belongs to the OXA1/ALB3/YidC family. Type 1 subfamily. As to quaternary structure, interacts with the Sec translocase complex via SecD. Specifically interacts with transmembrane segments of nascent integral membrane proteins during membrane integration.

Its subcellular location is the cell membrane. In terms of biological role, required for the insertion and/or proper folding and/or complex formation of integral membrane proteins into the membrane. Involved in integration of membrane proteins that insert both dependently and independently of the Sec translocase complex, as well as at least some lipoproteins. Aids folding of multispanning membrane proteins. The sequence is that of Membrane protein insertase YidC from Wigglesworthia glossinidia brevipalpis.